Consider the following 425-residue polypeptide: Adenylosuccinate synthetase (425 aa).

Residues 12 to 18 (GDEGKGK) and 40 to 42 (GHT) each bind GTP. D13 serves as the catalytic Proton acceptor. Mg(2+)-binding residues include D13 and G40. IMP-binding positions include 13–16 (DEGK), 38–41 (NAGH), T130, R144, Q224, T239, and R301. H41 serves as the catalytic Proton donor. Substrate is bound at residue 297–303 (TVSNRRR). GTP contacts are provided by residues R303, 329 to 331 (KLD), and 411 to 413 (STS).

The protein belongs to the adenylosuccinate synthetase family. In terms of assembly, homodimer. Mg(2+) serves as cofactor.

The protein localises to the cytoplasm. It catalyses the reaction IMP + L-aspartate + GTP = N(6)-(1,2-dicarboxyethyl)-AMP + GDP + phosphate + 2 H(+). Its pathway is purine metabolism; AMP biosynthesis via de novo pathway; AMP from IMP: step 1/2. Functionally, plays an important role in the de novo pathway of purine nucleotide biosynthesis. Catalyzes the first committed step in the biosynthesis of AMP from IMP. The polypeptide is Adenylosuccinate synthetase (Wolbachia pipientis wMel).